A 132-amino-acid polypeptide reads, in one-letter code: L-ectoine synthase (132 aa).

Belongs to the ectoine synthase family.

The catalysed reaction is (2S)-4-acetamido-2-aminobutanoate = L-ectoine + H2O. Its pathway is amine and polyamine biosynthesis; ectoine biosynthesis; L-ectoine from L-aspartate 4-semialdehyde: step 3/3. Catalyzes the circularization of gamma-N-acetyl-alpha,gamma-diaminobutyric acid (ADABA) to ectoine (1,4,5,6-tetrahydro-2-methyl-4-pyrimidine carboxylic acid), which is an excellent osmoprotectant. This is L-ectoine synthase from Rhodococcus jostii (strain RHA1).